Reading from the N-terminus, the 346-residue chain is Uroporphyrinogen decarboxylase (346 aa).

Substrate contacts are provided by residues Arg26–Arg30, Asp76, Tyr153, Ser208, and His323.

Belongs to the uroporphyrinogen decarboxylase family. In terms of assembly, homodimer.

Its subcellular location is the cytoplasm. The enzyme catalyses uroporphyrinogen III + 4 H(+) = coproporphyrinogen III + 4 CO2. The protein operates within porphyrin-containing compound metabolism; protoporphyrin-IX biosynthesis; coproporphyrinogen-III from 5-aminolevulinate: step 4/4. Catalyzes the decarboxylation of four acetate groups of uroporphyrinogen-III to yield coproporphyrinogen-III. The protein is Uroporphyrinogen decarboxylase of Prochlorococcus marinus (strain MIT 9312).